A 249-amino-acid polypeptide reads, in one-letter code: Segregation and condensation protein A (249 aa).

The protein belongs to the ScpA family. Component of a cohesin-like complex composed of ScpA, ScpB and the Smc homodimer, in which ScpA and ScpB bind to the head domain of Smc. The presence of the three proteins is required for the association of the complex with DNA.

The protein localises to the cytoplasm. In terms of biological role, participates in chromosomal partition during cell division. May act via the formation of a condensin-like complex containing Smc and ScpB that pull DNA away from mid-cell into both cell halves. This Listeria welshimeri serovar 6b (strain ATCC 35897 / DSM 20650 / CCUG 15529 / CIP 8149 / NCTC 11857 / SLCC 5334 / V8) protein is Segregation and condensation protein A.